Here is a 149-residue protein sequence, read N- to C-terminus: Natriuretic peptides A (149 aa).

Residues 1 to 23 (MGSPIAASFLLFLAVQLLGQTGA) form the signal peptide. 2 consecutive propeptides follow at residues 24-121 (NPVY…AAPR) and 91-101 (DGGALGRSPWD). Residues 49–103 (MPLEDEAESPQALSEQNAEAGAALSPLPEVPPWTGEVSPAQRDGGALGRSPWDSS) form a disordered region. Residue serine 127 is modified to Phosphoserine. Cysteine 128 and cysteine 144 are oxidised to a cystine. Positions 145–149 (NSFRY) are important for degradation of atrial natriuretic peptide by IDE.

Belongs to the natriuretic peptide family. As to quaternary structure, homodimer; disulfide-linked antiparallel dimer. The precursor molecule is proteolytically cleaved by CORIN at Arg-121 to produce the atrial natriuretic peptide. Undergoes further proteolytic cleavage by unknown proteases to give rise to long-acting natriuretic peptide, vessel dilator and kaliuretic peptide. Additional processing gives rise to the auriculin and atriopeptin peptides. In the kidneys, alternative processing by an unknown protease results in the peptide urodilatin. In terms of processing, cleavage by MME initiates degradation of the factor and thereby regulates its activity. Degradation by IDE results in reduced activation of NPR1 (in vitro). During IDE degradation, the resulting products can temporarily stimulate NPR2 to produce cGMP, before the fragments are completely degraded and inactivated by IDE (in vitro). Post-translationally, degraded by IDE. Phosphorylation on Ser-127 decreases vasorelaxant activity.

It localises to the secreted. It is found in the perikaryon. The protein resides in the cell projection. Functionally, hormone that plays a key role in mediating cardio-renal homeostasis, and is involved in vascular remodeling and regulating energy metabolism. Acts by specifically binding and stimulating NPR1 to produce cGMP, which in turn activates effector proteins, such as PRKG1, that drive various biological responses. Regulates vasodilation, natriuresis, diuresis and aldosterone synthesis and is therefore essential for regulating blood pressure, controlling the extracellular fluid volume and maintaining the fluid-electrolyte balance. Also involved in inhibiting cardiac remodeling and cardiac hypertrophy by inducing cardiomyocyte apoptosis and attenuating the growth of cardiomyocytes and fibroblasts. Plays a role in female pregnancy by promoting trophoblast invasion and spiral artery remodeling in uterus, and thus prevents pregnancy-induced hypertension. In adipose tissue, acts in various cGMP- and PKG-dependent pathways to regulate lipid metabolism and energy homeostasis. This includes up-regulating lipid metabolism and mitochondrial oxygen utilization by activating the AMP-activated protein kinase (AMPK), and increasing energy expenditure by acting via MAPK11 to promote the UCP1-dependent thermogenesis of brown adipose tissue. Binds the clearance receptor NPR3 which removes the hormone from circulation. May have a role in cardio-renal homeostasis through regulation of natriuresis, diuresis, vasodilation, and inhibiting aldosterone synthesis. In vitro, promotes the production of cGMP and induces vasodilation. May promote natriuresis, at least in part, by enhancing prostaglandin E2 synthesis resulting in the inhibition of renal Na+-K+-ATPase. However reports on the involvement of this peptide in mammal blood volume and blood pressure homeostasis are conflicting; according to a report, in vivo it is not sufficient to activate cGMP and does not inhibit collecting duct transport nor effect diuresis and natriuresis. Appears to bind to specific receptors that are distinct from the receptors bound by atrial natriuretic peptide and vessel dilator. Possibly enhances protein excretion in urine by decreasing proximal tubular protein reabsorption. Its function is as follows. May have a role in cardio-renal homeostasis through regulation of natriuresis, diuresis, and vasodilation. In vitro, promotes the production of cGMP and induces vasodilation. May promote natriuresis, at least in part, by enhancing prostaglandin E2 synthesis resulting in the inhibition of renal Na+-K+-ATPase. However reports on the involvement of this peptide in mammal blood volume and blood pressure homeostasis are conflicting; according to a report it is not sufficient to activate cGMP and does not inhibit collecting duct transport nor effect diuresis and natriuresis. Appears to bind to specific receptors that are distinct from the receptors bound by the atrial natriuretic and long-acting natriuretic peptides. Possibly functions in protein excretion in urine by maintaining the integrity of the proximal tubules and enhancing protein excretion by decreasing proximal tubular protein reabsorption. In terms of biological role, may have a role in cardio-renal homeostasis through regulation of diuresis and inhibiting aldosterone synthesis. In vitro, promotes the production of cGMP and induces vasodilation. May promote natriuresis, at least in part, by enhancing prostaglandin E2 synthesis resulting in the inhibition of renal Na+-K+-ATPase. May have a role in potassium excretion but not sodium excretion (natriuresis). Possibly enhances protein excretion in urine by decreasing proximal tubular protein reabsorption. Functionally, hormone produced in the kidneys that appears to be important for maintaining cardio-renal homeostasis. Mediates vasodilation, natriuresis and diuresis primarily in the renal system, in order to maintain the extracellular fluid volume and control the fluid-electrolyte balance. Specifically binds and stimulates cGMP production by renal transmembrane receptors, likely NPR1. Urodilatin not ANP, may be the natriuretic peptide responsible for the regulation of sodium and water homeostasis in the kidney. May have a role in cardio-renal homeostasis through regulation of natriuresis and vasodilation. In vivo promotes natriuresis and in vitro, vasodilates renal artery strips. Its function is as follows. May have a role in cardio-renal homeostasis through regulation of regulation of natriuresis and vasodilation. In vivo promotes natriuresis. In vitro, vasodilates intestinal smooth muscle but not smooth muscle strips. In terms of biological role, may have a role in cardio-renal homeostasis through regulation of natriuresis and vasodilation. In vivo promotes natriuresis. In vitro, selectively vasodilates intestinal and vascular smooth muscle strips. Functionally, may have a role in cardio-renal homeostasis through regulation of natriuresis and vasodilation. In vivo promotes natriuresis. In vitro, selectively vasodilates intestinal smooth muscle but not vascular smooth muscle strips. The protein is Natriuretic peptides A (NPPA) of Canis lupus familiaris (Dog).